The chain runs to 117 residues: Immunoglobulin heavy variable 1-69 (117 aa).

Positions 1–19 (MDWTWRFLFVVAAATGVQS) are cleaved as a signal peptide. The residue at position 20 (glutamine 20) is a Pyrrolidone carboxylic acid. Positions 20–44 (QVQLVQSGAEVKKPGSSVKVSCKAS) are framework-1. The Ig-like domain occupies 20–117 (QVQLVQSGAE…EDTAVYYCAR (98 aa)). The cysteines at positions 41 and 115 are disulfide-linked. A complementarity-determining-1 region spans residues 45 to 52 (GGTFSSYA). Positions 53 to 69 (ISWVRQAPGQGLEWMGG) are framework-2. The interval 70 to 77 (IIPIFGTA) is complementarity-determining-2. The framework-3 stretch occupies residues 78 to 115 (NYAQKFQGRVTITADKSTSTAYMELSSLRSEDTAVYYC). Residues 116 to 117 (AR) are complementarity-determining-3.

In terms of assembly, immunoglobulins are composed of two identical heavy chains and two identical light chains; disulfide-linked.

Its subcellular location is the secreted. It is found in the cell membrane. Functionally, v region of the variable domain of immunoglobulin heavy chains that participates in the antigen recognition. Immunoglobulins, also known as antibodies, are membrane-bound or secreted glycoproteins produced by B lymphocytes. In the recognition phase of humoral immunity, the membrane-bound immunoglobulins serve as receptors which, upon binding of a specific antigen, trigger the clonal expansion and differentiation of B lymphocytes into immunoglobulins-secreting plasma cells. Secreted immunoglobulins mediate the effector phase of humoral immunity, which results in the elimination of bound antigens. The antigen binding site is formed by the variable domain of one heavy chain, together with that of its associated light chain. Thus, each immunoglobulin has two antigen binding sites with remarkable affinity for a particular antigen. The variable domains are assembled by a process called V-(D)-J rearrangement and can then be subjected to somatic hypermutations which, after exposure to antigen and selection, allow affinity maturation for a particular antigen. The chain is Immunoglobulin heavy variable 1-69 from Homo sapiens (Human).